Consider the following 231-residue polypeptide: NADH-ubiquinone oxidoreductase chain 4 (231 aa).

The next 7 membrane-spanning stretches (helical) occupy residues 1–21 (PIAG…YGII), 34–54 (MFLP…LTCL), 63–85 (IAYS…TPWG), 89–111 (AMAL…NTTY), 128–148 (ILPM…ATPP), 169–189 (TIIL…HMFL), and 211–231 (LLMT…ELVI).

Belongs to the complex I subunit 4 family.

The protein localises to the mitochondrion membrane. It catalyses the reaction a ubiquinone + NADH + 5 H(+)(in) = a ubiquinol + NAD(+) + 4 H(+)(out). Its function is as follows. Core subunit of the mitochondrial membrane respiratory chain NADH dehydrogenase (Complex I) that is believed to belong to the minimal assembly required for catalysis. Complex I functions in the transfer of electrons from NADH to the respiratory chain. The immediate electron acceptor for the enzyme is believed to be ubiquinone. The chain is NADH-ubiquinone oxidoreductase chain 4 (MT-ND4) from Porthidium ophryomegas (Slender hognose viper).